The following is a 188-amino-acid chain: Elongation factor P (188 aa).

The protein belongs to the elongation factor P family.

It localises to the cytoplasm. It functions in the pathway protein biosynthesis; polypeptide chain elongation. Involved in peptide bond synthesis. Stimulates efficient translation and peptide-bond synthesis on native or reconstituted 70S ribosomes in vitro. Probably functions indirectly by altering the affinity of the ribosome for aminoacyl-tRNA, thus increasing their reactivity as acceptors for peptidyl transferase. The protein is Elongation factor P of Paramagnetospirillum magneticum (strain ATCC 700264 / AMB-1) (Magnetospirillum magneticum).